A 424-amino-acid chain; its full sequence is UDP-N-acetylglucosamine 1-carboxyvinyltransferase (424 aa).

22–23 is a phosphoenolpyruvate binding site; the sequence is KN. Residue Arg95 coordinates UDP-N-acetyl-alpha-D-glucosamine. The Proton donor role is filled by Cys119. Position 119 is a 2-(S-cysteinyl)pyruvic acid O-phosphothioketal (Cys119). UDP-N-acetyl-alpha-D-glucosamine is bound by residues 124–128, Asp311, and Ile333; that span reads RPVDQ.

Belongs to the EPSP synthase family. MurA subfamily.

It localises to the cytoplasm. It carries out the reaction phosphoenolpyruvate + UDP-N-acetyl-alpha-D-glucosamine = UDP-N-acetyl-3-O-(1-carboxyvinyl)-alpha-D-glucosamine + phosphate. The protein operates within cell wall biogenesis; peptidoglycan biosynthesis. Functionally, cell wall formation. Adds enolpyruvyl to UDP-N-acetylglucosamine. This Polaromonas naphthalenivorans (strain CJ2) protein is UDP-N-acetylglucosamine 1-carboxyvinyltransferase.